We begin with the raw amino-acid sequence, 336 residues long: 3-isopropylmalate dehydrogenase (336 aa).

Positions 87, 97, 121, and 211 each coordinate substrate. Asp-211, Asp-235, and Asp-239 together coordinate Mg(2+). 271–283 (GSAPDIAGQGIAD) contacts NAD(+).

Belongs to the isocitrate and isopropylmalate dehydrogenases family. LeuB type 2 subfamily. Homodimer. Requires Mg(2+) as cofactor. Mn(2+) is required as a cofactor.

It is found in the cytoplasm. The catalysed reaction is (2R,3S)-3-isopropylmalate + NAD(+) = 4-methyl-2-oxopentanoate + CO2 + NADH. The protein operates within amino-acid biosynthesis; L-leucine biosynthesis; L-leucine from 3-methyl-2-oxobutanoate: step 3/4. Catalyzes the oxidation of 3-carboxy-2-hydroxy-4-methylpentanoate (3-isopropylmalate) to 3-carboxy-4-methyl-2-oxopentanoate. The product decarboxylates to 4-methyl-2 oxopentanoate. The chain is 3-isopropylmalate dehydrogenase from Mycolicibacterium gilvum (strain PYR-GCK) (Mycobacterium gilvum (strain PYR-GCK)).